A 168-amino-acid polypeptide reads, in one-letter code: MLVYQDLLTGDELLSDSFPYKEIHNGMLWEVEGKWVIQGAVNVDIGANPSAEGGEEDEGVDDQAVKVVDIVDTFRLQEQPAFDKKQFVTFMKRYIKNLTPKLDAEKQELFKKHIEGATKFLLSKLSDLQFFVGESMHDDGCLVFAYYKDGATDPTFLYFAYGLKEIKC.

The 168-residue stretch at 1 to 168 (MLVYQDLLTG…FAYGLKEIKC (168 aa)) folds into the TCTP domain.

This sequence belongs to the TCTP family.

The protein resides in the cytoplasm. Functionally, involved in calcium binding and microtubule stabilization. The protein is Translationally-controlled tumor protein homolog (TCTP) of Elaeis guineensis var. tenera (Oil palm).